The primary structure comprises 388 residues: tRNA(Ile)-lysidine synthase (388 aa).

Residue 51–56 participates in ATP binding; it reads SGGRDS.

The protein belongs to the tRNA(Ile)-lysidine synthase family.

It is found in the cytoplasm. The catalysed reaction is cytidine(34) in tRNA(Ile2) + L-lysine + ATP = lysidine(34) in tRNA(Ile2) + AMP + diphosphate + H(+). In terms of biological role, ligates lysine onto the cytidine present at position 34 of the AUA codon-specific tRNA(Ile) that contains the anticodon CAU, in an ATP-dependent manner. Cytidine is converted to lysidine, thus changing the amino acid specificity of the tRNA from methionine to isoleucine. The chain is tRNA(Ile)-lysidine synthase from Bifidobacterium longum subsp. infantis (strain ATCC 15697 / DSM 20088 / JCM 1222 / NCTC 11817 / S12).